The chain runs to 327 residues: Tagatose 1,6-diphosphate aldolase 2 (327 aa).

This sequence belongs to the aldolase LacD family.

The catalysed reaction is D-tagatofuranose 1,6-bisphosphate = D-glyceraldehyde 3-phosphate + dihydroxyacetone phosphate. The protein operates within carbohydrate metabolism; D-tagatose 6-phosphate degradation; D-glyceraldehyde 3-phosphate and glycerone phosphate from D-tagatose 6-phosphate: step 2/2. The polypeptide is Tagatose 1,6-diphosphate aldolase 2 (Streptococcus pyogenes serotype M6 (strain ATCC BAA-946 / MGAS10394)).